The chain runs to 90 residues: MTRTVMCRKYQEELPGLERPPYPGAKGQDIFDHVSAKAWADWQKHQTLLINEKRLNMMNADDRKYLQGEMDKFFSGEEYAKADGYVPPAE.

Belongs to the Fe(2+)-trafficking protein family.

Functionally, could be a mediator in iron transactions between iron acquisition and iron-requiring processes, such as synthesis and/or repair of Fe-S clusters in biosynthetic enzymes. In Pseudomonas fluorescens (strain ATCC BAA-477 / NRRL B-23932 / Pf-5), this protein is Probable Fe(2+)-trafficking protein.